The primary structure comprises 453 residues: Indoleamine 2,3-dioxygenase (453 aa).

H331 is a heme binding site.

Belongs to the indoleamine 2,3-dioxygenase family. The cofactor is heme.

It carries out the reaction D-tryptophan + O2 = N-formyl-D-kynurenine. The catalysed reaction is L-tryptophan + O2 = N-formyl-L-kynurenine. It participates in cofactor biosynthesis; NAD(+) biosynthesis. Its function is as follows. Catalyzes the first step in tryptophan catabolism in order to supply de novo nicotinamide adenine dinucleotide (NAD(+)) via the kynurenine pathway. Plays a role in the cellular response to telomere uncapping. This Saccharomyces cerevisiae (strain ATCC 204508 / S288c) (Baker's yeast) protein is Indoleamine 2,3-dioxygenase (BNA2).